The primary structure comprises 197 residues: Translation machinery-associated protein 22 (197 aa).

An SUI1 domain is found at 102–173; it reads VQIKRVERNK…DVKEWLLEVY (72 aa).

The protein belongs to the DENR family. Interacts with the 40S ribosomal subunit.

The protein localises to the cytoplasm. This is Translation machinery-associated protein 22 (tma22) from Aspergillus niger (strain ATCC MYA-4892 / CBS 513.88 / FGSC A1513).